We begin with the raw amino-acid sequence, 309 residues long: L-aminoadipate-semialdehyde dehydrogenase-phosphopantetheinyl transferase (309 aa).

CoA-binding positions include R47, 86-91 (RTSKGK), and 108-111 (NISH). D129 and E181 together coordinate Mg(2+). 181–185 (ESFIK) is a CoA binding site.

The protein belongs to the P-Pant transferase superfamily. AcpS family. As to quaternary structure, monomer. The cofactor is Mg(2+).

It is found in the cytoplasm. Its subcellular location is the cytosol. The catalysed reaction is apo-[ACP] + CoA = holo-[ACP] + adenosine 3',5'-bisphosphate + H(+). The enzyme catalyses apo-[ACP] + acetyl-CoA = acetyl-[ACP] + adenosine 3',5'-bisphosphate + H(+). Functionally, catalyzes the post-translational modification of target proteins by phosphopantetheine. Can transfer the 4'-phosphopantetheine moiety from coenzyme A, regardless of whether the CoA is presented in the free thiol form or as an acetyl thioester, to a serine residue of a broad range of acceptors including the acyl carrier domain of FASN. This chain is L-aminoadipate-semialdehyde dehydrogenase-phosphopantetheinyl transferase (Aasdhppt), found in Mus musculus (Mouse).